A 996-amino-acid polypeptide reads, in one-letter code: TBC1 domain family member 31 (996 aa).

WD repeat units follow at residues 33–74, 75–116, 117–157, 158–200, 201–248, 249–296, and 297–334; these read HSTS…LHGN, RFNL…TVTK, ELVS…LDTF, QRKR…CDTL, FCKY…ATGL, FRII…IQTC, and KLLFEIGTVEEGISSSVISPHGRYIASIMENGSLNVYS. Residues 388–414 are a coiled coil; sequence TRVLKQDLTGDLENKENELSEGLNKKR. Residues 424 to 599 form the Rab-GAP TBC domain; that stretch reads EYPTKYRMFI…RLFDNIFSNH (176 aa). Residues 699 to 844 adopt a coiled-coil conformation; sequence ELDFLRERQT…LTTSQEAVAK (146 aa). The interval 983 to 986 is mediates direct interaction with PJA2; sequence RARN.

As to quaternary structure, interacts with PJA2; the interaction is direct and recruits PJA2 to centrosomes. Interacts with OFD1; regulates its activity in cilium assembly. Interacts with PRKACA.

Its subcellular location is the cytoplasm. It is found in the cytoskeleton. The protein resides in the microtubule organizing center. The protein localises to the centrosome. It localises to the centriolar satellite. Its subcellular location is the cilium basal body. Functionally, molecular adapter which is involved in cilium biogenesis. Part of a functional complex including OFD1 a centriolar protein involved in cilium assembly. Could regulate the cAMP-dependent phosphorylation of OFD1, and its subsequent ubiquitination by PJA2 which ultimately leads to its proteasomal degradation. The sequence is that of TBC1 domain family member 31 from Mus musculus (Mouse).